Here is a 182-residue protein sequence, read N- to C-terminus: Large ribosomal subunit protein bL25 (182 aa).

The protein belongs to the bacterial ribosomal protein bL25 family. CTC subfamily. Part of the 50S ribosomal subunit; part of the 5S rRNA/L5/L18/L25 subcomplex. Contacts the 5S rRNA. Binds to the 5S rRNA independently of L5 and L18.

This is one of the proteins that binds to the 5S RNA in the ribosome where it forms part of the central protuberance. This chain is Large ribosomal subunit protein bL25, found in Borrelia turicatae (strain 91E135).